Here is a 159-residue protein sequence, read N- to C-terminus: Probable cyclic pyranopterin monophosphate synthase (159 aa).

Substrate is bound by residues L75 to H77 and M111 to E112. D126 is a catalytic residue.

Belongs to the MoaC family. In terms of assembly, homohexamer; trimer of dimers.

It carries out the reaction (8S)-3',8-cyclo-7,8-dihydroguanosine 5'-triphosphate = cyclic pyranopterin phosphate + diphosphate. It functions in the pathway cofactor biosynthesis; molybdopterin biosynthesis. Its function is as follows. Catalyzes the conversion of (8S)-3',8-cyclo-7,8-dihydroguanosine 5'-triphosphate to cyclic pyranopterin monophosphate (cPMP). The sequence is that of Probable cyclic pyranopterin monophosphate synthase from Pyrococcus horikoshii (strain ATCC 700860 / DSM 12428 / JCM 9974 / NBRC 100139 / OT-3).